A 657-amino-acid chain; its full sequence is Glycogen debranching enzyme (657 aa).

D336 serves as the catalytic Nucleophile. Catalysis depends on E371, which acts as the Proton donor. Residues 460–481 (ANGEENRDGTNNNYSNNHGKEG) form a disordered region.

It belongs to the glycosyl hydrolase 13 family.

It carries out the reaction Hydrolysis of (1-&gt;6)-alpha-D-glucosidic linkages to branches with degrees of polymerization of three or four glucose residues in limit dextrin.. The protein operates within glycan degradation; glycogen degradation. Its function is as follows. Removes maltotriose and maltotetraose chains that are attached by 1,6-alpha-linkage to the limit dextrin main chain, generating a debranched limit dextrin. The polypeptide is Glycogen debranching enzyme (Escherichia coli O157:H7).